Here is a 47-residue protein sequence, read N- to C-terminus: uncharacterized protein (47 aa).

Disordered stretches follow at residues 1 to 20 and 25 to 47; these read MSTD…EEWQ and EKEK…NRKG. The span at 25 to 40 shows a compositional bias: basic and acidic residues; the sequence is EKEKDENNRLFQEQKQ.

This is an uncharacterized protein from Dictyostelium discoideum (Social amoeba).